The primary structure comprises 244 residues: Protein pendolino (244 aa).

Residues 20 to 176 enclose the UBC core domain; that stretch reads QQEYKILAEY…VQENIKESKE (157 aa).

It belongs to the ubiquitin-conjugating enzyme family. FTS subfamily. Interacts (via N-terminus) with cav/HOAP (via N-terminus); the interaction is direct. Probably interacts (via N-terminus and UBC domain) with ver and moi.

The protein localises to the nucleus. Its subcellular location is the nucleolus. The protein resides in the chromosome. Required for efficient DNA replication, probably through involvement in telomere replication. May have a role in telomere capping of heterochromatic chromosome ends. The protein is Protein pendolino of Drosophila melanogaster (Fruit fly).